We begin with the raw amino-acid sequence, 535 residues long: CTP synthase (535 aa).

The amidoligase domain stretch occupies residues 1–267; it reads MTKYIFVTGG…DQIVCDHLKL (267 aa). Ser13 lines the CTP pocket. Residue Ser13 participates in UTP binding. Position 14–19 (14–19) interacts with ATP; that stretch reads SLGKGI. Tyr54 is an L-glutamine binding site. Position 71 (Asp71) interacts with ATP. Mg(2+) contacts are provided by Asp71 and Glu141. CTP is bound by residues 148 to 150, 188 to 193, and Lys224; these read DIE and KTKPTQ. Residues 188–193 and Lys224 each bind UTP; that span reads KTKPTQ. 240 to 242 lines the ATP pocket; it reads RDA. Positions 292–534 constitute a Glutamine amidotransferase type-1 domain; that stretch reads KIALVGKYVE…VSASITNKES (243 aa). Residue Gly354 participates in L-glutamine binding. Cys381 acts as the Nucleophile; for glutamine hydrolysis in catalysis. L-glutamine contacts are provided by residues 382-385, Glu405, and Arg462; that span reads LGMQ. Active-site residues include His507 and Glu509.

The protein belongs to the CTP synthase family. Homotetramer.

It catalyses the reaction UTP + L-glutamine + ATP + H2O = CTP + L-glutamate + ADP + phosphate + 2 H(+). The catalysed reaction is L-glutamine + H2O = L-glutamate + NH4(+). It carries out the reaction UTP + NH4(+) + ATP = CTP + ADP + phosphate + 2 H(+). It functions in the pathway pyrimidine metabolism; CTP biosynthesis via de novo pathway; CTP from UDP: step 2/2. With respect to regulation, allosterically activated by GTP, when glutamine is the substrate; GTP has no effect on the reaction when ammonia is the substrate. The allosteric effector GTP functions by stabilizing the protein conformation that binds the tetrahedral intermediate(s) formed during glutamine hydrolysis. Inhibited by the product CTP, via allosteric rather than competitive inhibition. Functionally, catalyzes the ATP-dependent amination of UTP to CTP with either L-glutamine or ammonia as the source of nitrogen. Regulates intracellular CTP levels through interactions with the four ribonucleotide triphosphates. The polypeptide is CTP synthase (Bacillus mycoides (strain KBAB4) (Bacillus weihenstephanensis)).